Here is a 418-residue protein sequence, read N- to C-terminus: MSCSARLKTNLGMTSALSTHEVLNSNDTMCEILILLPPETIYKLILVSKRWLEIIASPCFRHTYLAKWKPNFELIGFFVCSSMYLGRRIDGTRRPRAEPSLPLLSTSSIGDEIESSGILKKLGYYIDSADGLLLCGRHPKAYYLWDPSTQKQQQLPRPRVHFEELCMSLISEDSPDQGFSYKVVRAECVAFPVNSTKVKVETFSSKTSTWSYSELICLEPLSLSPWTPGRVIKGVVYWHARGGKIAIYDSNSEEKRIDVIKLPKTYDYDEQVLGETDDGSLQYGWSNKSVMEVWKLEKVGNVLEWNLLFKVNFKAMWKMNQAVATRFSTWTKETQLLALFNQKSDLVYIRCDTQIFIYHTETKRVEVVQYQGRKSTLVWDFNKVVPYFRRTWPCSPLFENNAMMIDTPQCNASSAGSN.

The F-box domain occupies 18 to 66 (STHEVLNSNDTMCEILILLPPETIYKLILVSKRWLEIIASPCFRHTYLA).

This is F-box protein At5g03970 from Arabidopsis thaliana (Mouse-ear cress).